Here is a 244-residue protein sequence, read N- to C-terminus: MSSKLFCLRSFPSVQRTAWQRLVLPSTRKFSLTPTTFDKTPSGRIPPDQKAANIISSVPSTSLLTKSGVLTVTAAALATAISKGIYVVNDESIVVASFLGLVGVFGTLGRKAYNEWSDKTIAKIGGIMQAARNDHTSAIRERIDQVASLQEVESVTQALFHTSKETARMEAEIFELEQRVALAKEAKSVLDSWVHHEANVRAEQQERLVEDVLARVNSKVSTQKFQQDALNESLGEIEKVLASA.

A mitochondrion-targeting transit peptide spans 1-36; that stretch reads MSSKLFCLRSFPSVQRTAWQRLVLPSTRKFSLTPTT.

This sequence belongs to the eukaryotic ATPase B chain family. F-type ATPases have 2 components, CF(1) - the catalytic core - and CF(0) - the membrane proton channel. In yeast, the dimeric form of ATP synthase consists of 17 polypeptides: alpha, beta, gamma, delta, epsilon, 4 (B), 5 (OSCP), 6 (A), 8, 9 (C), d, E (Tim11), f, g, h, i/j and k.

It is found in the mitochondrion. Its subcellular location is the mitochondrion inner membrane. Mitochondrial membrane ATP synthase (F(1)F(0) ATP synthase or Complex V) produces ATP from ADP in the presence of a proton gradient across the membrane which is generated by electron transport complexes of the respiratory chain. F-type ATPases consist of two structural domains, F(1) - containing the extramembraneous catalytic core, and F(0) - containing the membrane proton channel, linked together by a central stalk and a peripheral stalk. During catalysis, ATP synthesis in the catalytic domain of F(1) is coupled via a rotary mechanism of the central stalk subunits to proton translocation. Part of the complex F(0) domain and the peripheric stalk, which acts as a stator to hold the catalytic alpha(3)beta(3) subcomplex and subunit a/ATP6 static relative to the rotary elements. This chain is ATP synthase subunit 4, mitochondrial (atp4), found in Schizosaccharomyces pombe (strain 972 / ATCC 24843) (Fission yeast).